The primary structure comprises 614 residues: RNA polymerase sigma factor RpoD (614 aa).

Positions 168–245 are disordered; the sequence is DPDDNIAAPT…PEEKRSYPQG (78 aa). Over residues 193–209 the composition is skewed to acidic residues; the sequence is EADDDEEESEGGDDEEE. Residues 215–232 are compositionally biased toward polar residues; the sequence is TRSSQPSVSVRYPSSFSD. The interval 380–450 is sigma-70 factor domain-2; sequence MVEANLRLVI…TRSIADQART (71 aa). An Interaction with polymerase core subunit RpoC motif is present at residues 404–407; that stretch reads DLIQ. The sigma-70 factor domain-3 stretch occupies residues 459–535; it reads ETINKLNRIS…DSTMQSPIYV (77 aa). A sigma-70 factor domain-4 region spans residues 548–601; it reads VLSGLTAREAKVLRMRFGIDMNTDHTLEEVGKQFDVTRERIRQIEAKAWRKLRH. A DNA-binding region (H-T-H motif) is located at residues 574-593; sequence LEEVGKQFDVTRERIRQIEA.

It belongs to the sigma-70 factor family. RpoD/SigA subfamily. Interacts transiently with the RNA polymerase catalytic core.

It is found in the cytoplasm. Sigma factors are initiation factors that promote the attachment of RNA polymerase to specific initiation sites and are then released. This sigma factor is the primary sigma factor during exponential growth. In Pseudomonas putida (Arthrobacter siderocapsulatus), this protein is RNA polymerase sigma factor RpoD.